The sequence spans 177 residues: MLLLPQKDWHWKYNDSYGVLSVSLGSEIEFLTAYKAKSLIPDALSSMEFNISHAKFYMSLLDKLPKTLTLTDAAVVQIALNATAAHFMLTPQMPKSWFFDTSEVCVYSDVGKVFELKCQKQRALVLVVENTLQSALVMLLSPECVLSGAKTLGQFETIKVMHNRLHPLRAQRHVVAA.

Belongs to the ZapC family. As to quaternary structure, interacts directly with FtsZ.

It localises to the cytoplasm. Functionally, contributes to the efficiency of the cell division process by stabilizing the polymeric form of the cell division protein FtsZ. Acts by promoting interactions between FtsZ protofilaments and suppressing the GTPase activity of FtsZ. This chain is Cell division protein ZapC, found in Shewanella oneidensis (strain ATCC 700550 / JCM 31522 / CIP 106686 / LMG 19005 / NCIMB 14063 / MR-1).